The chain runs to 20 residues: Acidic phospholipase A2 CbIbeta (20 aa).

Belongs to the phospholipase A2 family. Group II subfamily. D49 sub-subfamily. In terms of assembly, heterodimer of an acidic subunit (CbIalpha or CbIbeta) and a basic subunit (CbII). The acidic subunit (CbI) is non-toxic, and increases the toxicity of the basic subunit (CbII). It depends on Ca(2+) as a cofactor. Contains 7 disulfide bonds. As to expression, expressed by the venom gland.

It localises to the secreted. The catalysed reaction is a 1,2-diacyl-sn-glycero-3-phosphocholine + H2O = a 1-acyl-sn-glycero-3-phosphocholine + a fatty acid + H(+). In terms of biological role, heterodimer: presynaptic neurotoxin. Functionally, monomer: Snake venom phospholipase A2 (PLA2) is inactive towards micellar phosphatidylcholine but is weakly active towards non-micellar dithiolecithin. PLA2 catalyzes the calcium-dependent hydrolysis of the 2-acyl groups in 3-sn-phosphoglycerides. This chain is Acidic phospholipase A2 CbIbeta, found in Pseudocerastes fieldi (Field's horned viper).